The following is a 589-amino-acid chain: Serine/threonine-protein phosphatase 2A 65 kDa regulatory subunit A alpha isoform (589 aa).

Position 2 is an N-acetylalanine (Ala-2). HEAT repeat units lie at residues 8 to 46 (DSLY…GVER), 47 to 84 (TRSE…GGPE), 85 to 123 (YVHC…SPSD), 124 to 161 (LEAH…VSSA), 162 to 200 (VKAE…ELDN), 201 to 239 (VKSE…PQED), 240 to 278 (LEAL…GPEI), 279 to 321 (TKTD…RENV), 322 to 360 (IMTQ…GKDN), 361 to 399 (TIEH…GIRQ), 400 to 438 (LSQS…GVEF), 439 to 477 (FDEK…GKEW), 478 to 516 (AHAT…GQDI), 517 to 555 (TTKH…DNST), and 556 to 589 (LQSE…LSLA). The residue at position 280 (Lys-280) is an N6-acetyllysine.

It belongs to the phosphatase 2A regulatory subunit A family. In terms of assembly, PP2A consists of a common heterodimeric core enzyme, composed of PPP2CA a 36 kDa catalytic subunit (subunit C) and PPP2R1A a 65 kDa constant regulatory subunit (PR65 or subunit A), that associates with a variety of regulatory subunits. Proteins that associate with the core dimer include three families of regulatory subunits B (the R2/B/PR55/B55, R3/B''/PR72/PR130/PR59 and R5/B'/B56 families), the 48 kDa variable regulatory subunit, viral proteins, and cell signaling molecules. Found in a complex with at least ARL2, PPP2CB, PPP2R1A, PPP2R2A, PPP2R5E and TBCD. Interacts with the PP2A C catalytic subunit PPP2CA. Interacts with the PP2A B subunit PPP2R2A. Interacts with the PP2A B subunit PPP2R5D. Interacts with FOXO1; the interaction dephosphorylates FOXO1 on AKT-mediated phosphorylation sites. Interacts with IPO9. Interacts with TP53 and SGO1. Interacts with PLA2G16; this interaction might decrease PP2A activity. Interacts with CTTNBP2NL. Interacts with GNA12; the interaction promotes protein phosphatase 2A activation causing dephosphorylation of MAPT. Interacts with CIP2A; this interaction stabilizes CIP2A. Interacts with PABIR1/FAM122A. Interacts with ADCY8; antagonizes interaction between ADCY8 and calmodulin. Interacts with CRTC3 (when phosphorylated at 'Ser-391'). Interacts with SPRY2. Part of the core of STRIPAK complexes composed of PP2A catalytic and scaffolding subunits, the striatins (PP2A regulatory subunits), the striatin-associated proteins MOB4, STRIP1 and STRIP2, PDCD10 and members of the STE20 kinases, such as STK24 and STK26. Component of the Integrator-PP2A (INTAC) complex, composed of the Integrator core complex and protein phosphatase 2A subunits PPP2CA and PPP2R1A.

It localises to the cytoplasm. It is found in the nucleus. The protein resides in the chromosome. The protein localises to the centromere. Its subcellular location is the lateral cell membrane. It localises to the cell projection. It is found in the dendrite. Its function is as follows. The PR65 subunit of protein phosphatase 2A serves as a scaffolding molecule to coordinate the assembly of the catalytic subunit and a variable regulatory B subunit. Upon interaction with GNA12 promotes dephosphorylation of microtubule associated protein TAU/MAPT. Required for proper chromosome segregation and for centromeric localization of SGO1 in mitosis. Together with RACK1 adapter, mediates dephosphorylation of AKT1 at 'Ser-473', preventing AKT1 activation and AKT-mTOR signaling pathway. Dephosphorylation of AKT1 is essential for regulatory T-cells (Treg) homeostasis and stability. Part of the striatin-interacting phosphatase and kinase (STRIPAK) complexes. STRIPAK complexes have critical roles in protein (de)phosphorylation and are regulators of multiple signaling pathways including Hippo, MAPK, nuclear receptor and cytoskeleton remodeling. Different types of STRIPAK complexes are involved in a variety of biological processes such as cell growth, differentiation, apoptosis, metabolism and immune regulation. Key mediator of a quality checkpoint during transcription elongation as part of the Integrator-PP2A (INTAC) complex. The INTAC complex drives premature transcription termination of transcripts that are unfavorably configured for transcriptional elongation: within the INTAC complex, acts as a scaffolding subunit for PPP2CA, which catalyzes dephosphorylation of the C-terminal domain (CTD) of Pol II subunit POLR2A/RPB1 and SUPT5H/SPT5, thereby preventing transcriptional elongation. Regulates the recruitment of the SKA complex to kinetochores. The sequence is that of Serine/threonine-protein phosphatase 2A 65 kDa regulatory subunit A alpha isoform (Ppp2r1a) from Mus musculus (Mouse).